Here is a 340-residue protein sequence, read N- to C-terminus: MDRTRIVRRWRRNMDVADDAEYVEMLATLSEGSVRRNFNPYTDIDWESPEFAVTDNDPRWILPATDPLGRHPWYQAQSRERQIEIGMWRQANVAKVGLHFESILIRGLMNYTFWMPNGSPEYRYCLHESVEECNHTMMFQEMVNRVGADVPGLPRRLRWVSPLVPLVAGPLPVAFFIGVLAGEEPIDHTQKNVLREGKSLHPIMERVMSIHVAEEARHISFAHEYLRKRLPRLTRMQRFWIALYFPLTMRSLCNAIVVPPKAFWEEFDIPREVKKELFFGSPESRKWLCDMFADARMLAHDTGLMNPIARLVWRLCKIDGKPSRYRSEPQRQHLAAAPAA.

Transmembrane regions (helical) follow at residues 162–182 and 239–259; these read PLVP…VLAG and FWIA…IVVP.

It is found in the cell membrane. This is an uncharacterized protein from Mycobacterium tuberculosis (strain CDC 1551 / Oshkosh).